The primary structure comprises 344 residues: Biotin synthase (344 aa).

A Radical SAM core domain is found at 65-290 (PEVEVEGIIS…RTMLRFAGGR (226 aa)). Cys80, Cys84, and Cys87 together coordinate [4Fe-4S] cluster. Residues Cys123, Cys156, Cys215, and Arg285 each coordinate [2Fe-2S] cluster.

Belongs to the radical SAM superfamily. Biotin synthase family. In terms of assembly, homodimer. The cofactor is [4Fe-4S] cluster. [2Fe-2S] cluster is required as a cofactor.

The catalysed reaction is (4R,5S)-dethiobiotin + (sulfur carrier)-SH + 2 reduced [2Fe-2S]-[ferredoxin] + 2 S-adenosyl-L-methionine = (sulfur carrier)-H + biotin + 2 5'-deoxyadenosine + 2 L-methionine + 2 oxidized [2Fe-2S]-[ferredoxin]. It functions in the pathway cofactor biosynthesis; biotin biosynthesis; biotin from 7,8-diaminononanoate: step 2/2. Its function is as follows. Catalyzes the conversion of dethiobiotin (DTB) to biotin by the insertion of a sulfur atom into dethiobiotin via a radical-based mechanism. In Mycolicibacterium paratuberculosis (strain ATCC BAA-968 / K-10) (Mycobacterium paratuberculosis), this protein is Biotin synthase.